A 1489-amino-acid polypeptide reads, in one-letter code: WD repeat-containing protein 7 (1489 aa).

WD repeat units follow at residues 17 to 56 (APTHCISSILLTDDGGTIVTGCHDGQICLWDVSVELEVNP), 62 to 104 (GHTA…CIEF), 156 to 199 (ISPD…SGMQ), 324 to 366 (VICP…EKQE), 404 to 443 (NEPLKVTASVYIPAHGRLVCGREDGSIIIVPATQTAIVQL), 462 to 507 (GHRN…MKHI), and 558 to 597 (RHLFPIQVIKWRPSDDYLVVGCTDGSVYVWQMDTGALDRC). Disordered stretches follow at residues 754 to 783 (IKEHLLDEEEDEEEARRQSREDSDPEYRAS) and 911 to 947 (GDHMKKGPTRPPRPGTPDLSKARDSPPPSSNIVQGQI). Residues 767 to 782 (EARRQSREDSDPEYRA) are compositionally biased toward basic and acidic residues. Serine 935 carries the phosphoserine modification. WD repeat units lie at residues 1350-1389 (PAICRFYMVSYYERSHRIAVGARHGSVALYDIRTGKCQTI) and 1391-1431 (GHKG…LGSI). Serine 1455 carries the post-translational modification Phosphoserine.

The protein is WD repeat-containing protein 7 (Wdr7) of Mus musculus (Mouse).